A 24-amino-acid chain; its full sequence is Gaegurin-6 (24 aa).

A disulfide bridge links C18 with C24.

Belongs to the frog skin active peptide (FSAP) family. Brevinin subfamily. Monomer. As to expression, expressed by the skin glands.

The protein localises to the secreted. Its function is as follows. Has a non-hemolytic activity. Has a broad spectrum of activity against both Gram-positive and Gram-negative bacteria, fungi and protozoa. In Glandirana rugosa (Japanese wrinkled frog), this protein is Gaegurin-6 (GGN6).